We begin with the raw amino-acid sequence, 570 residues long: Nucleoprotein (570 aa).

Residues 54-241 (MRKQKRDDGD…IDTKKSSLNI (188 aa)) are binding site for the cap structure m7GTP. Mn(2+) contacts are provided by aspartate 390 and glutamate 392. Zn(2+)-binding residues include glutamate 400, cysteine 507, histidine 510, and cysteine 530. Mn(2+) is bound at residue aspartate 534.

Belongs to the arenaviridae nucleocapsid protein family. As to quaternary structure, homomultimerizes to form the nucleocapsid. Binds to viral genomic RNA. Interacts with glycoprotein G2. Interacts with protein Z; this interaction probably directs the encapsidated genome to budding sites. Interacts with protein L; this interaction does not interfere with Z-L interaction. Interacts with host IKBKE (via Protein kinase domain); the interaction inhibits IKBKE kinase activity.

The protein localises to the virion. The protein resides in the host cytoplasm. Its function is as follows. Encapsidates the genome, protecting it from nucleases. The encapsidated genomic RNA is termed the nucleocapsid (NC). Serves as template for viral transcription and replication. The increased presence of protein N in host cell does not seem to trigger the switch from transcription to replication as observed in other negative strain RNA viruses. Through the interaction with host IKBKE, strongly inhibits the phosphorylation and nuclear translocation of host IRF3, a protein involved in interferon activation pathway, leading to the inhibition of interferon-beta and IRF3-dependent promoters activation. Also encodes a functional 3'-5' exoribonuclease that degrades preferentially dsRNA substrates and thereby participates in the suppression of interferon induction. The chain is Nucleoprotein from Homo sapiens (Human).